Here is a 754-residue protein sequence, read N- to C-terminus: MDMRSGDREFPNGDFYSGEVKGIIPNGKGKYAWSDGTIYEGDWDEGKISGKGKLIWSSGAKYEGDFSGGYLHGFGTMTSPDESVYSGAWRMNVRHGLGRKEYCNSDLYDGLWKEGLQDGRGSYSWTNGNRYIGNWKKGKMCERGVMRWENGDLYDGFWLNGFRHGSGVYKFADGCLYYGTWSRGLKDGKGVFYPAGTKQPSLKKWCRSLEYDDTGKFVLSRSASVNVEELRSLNTVTQSLSVKTSAGETTCDPPRDFTCHGPVSKSARFSGSGQSEGQDKNRIVYEREYMQGVLIRETIMSSVDRSHKIKPPNRPREVRARSLMTFLRGEHNYYLMLNLQLGIRYTVGKITPVPRREVRASDFGKNARTKMFFPRDGSNFTPPHKSVDFSWKDYCPMVFRNLRQMFKLDAAEYMMSICGDDGLTEISSPGKSGSIFYLSHDDRFVIKTLKKSELQVLLRMLPKYYEHVGDHENTLITKFFGVHRITLKWGKKVRFVVMGNMFCTELKIHRRYDLKGSTQGRFTEKIKIQEKTTLKDLDLAYEFHMDKLLREALFKQIYLDCSFLESLNIIDYSLLLGLHFRAPGQLNDILEPPNAMSDQESVSSVDVGLTQEHSIPPKGLLLVTHEPNSVNTAPGPHIRGSTLRAFSVGEQEVDLILPGTARLRVQLGVNMPAQAHHKLIEDKEESATIELFEVYDVVVYMGIIDILQEYNTKKKVEHTCKSLQYDPMTISVTEPSTYSKRFVNFLHKVFPEER.

MORN repeat units lie at residues 16–38, 39–61, 62–84, 85–107, 108–130, 131–153, 154–176, and 177–198; these read YSGE…DGTI, YEGD…SGAK, YEGD…DESV, YSGA…NSDL, YDGL…NGNR, YIGN…NGDL, YDGF…DGCL, and YYGT…AGTK. The PIPK domain maps to 329-750; sequence GEHNYYLMLN…RFVNFLHKVF (422 aa). Residues 710–731 are activation loop; that stretch reads YNTKKKVEHTCKSLQYDPMTIS.

It catalyses the reaction a 1,2-diacyl-sn-glycero-3-phospho-(1D-myo-inositol 4-phosphate) + ATP = a 1,2-diacyl-sn-glycero-3-phospho-(1D-myo-inositol-4,5-bisphosphate) + ADP + H(+). This chain is Phosphatidylinositol 4-phosphate 5-kinase 7 (PIP5K7), found in Arabidopsis thaliana (Mouse-ear cress).